Here is a 475-residue protein sequence, read N- to C-terminus: Ribulose bisphosphate carboxylase large chain (475 aa).

A propeptide spanning residues 1-2 is cleaved from the precursor; it reads MS. P3 is modified (N-acetylproline). An N6,N6,N6-trimethyllysine modification is found at K14. Substrate is bound by residues N123 and T173. Catalysis depends on K175, which acts as the Proton acceptor. K177 contributes to the substrate binding site. Residues K201, D203, and E204 each contribute to the Mg(2+) site. N6-carboxylysine is present on K201. H294 functions as the Proton acceptor in the catalytic mechanism. Positions 295, 327, and 379 each coordinate substrate.

This sequence belongs to the RuBisCO large chain family. Type I subfamily. In terms of assembly, heterohexadecamer of 8 large chains and 8 small chains; disulfide-linked. The disulfide link is formed within the large subunit homodimers. Requires Mg(2+) as cofactor. In terms of processing, the disulfide bond which can form in the large chain dimeric partners within the hexadecamer appears to be associated with oxidative stress and protein turnover.

It is found in the plastid. The protein localises to the chloroplast. It catalyses the reaction 2 (2R)-3-phosphoglycerate + 2 H(+) = D-ribulose 1,5-bisphosphate + CO2 + H2O. It carries out the reaction D-ribulose 1,5-bisphosphate + O2 = 2-phosphoglycolate + (2R)-3-phosphoglycerate + 2 H(+). Its function is as follows. RuBisCO catalyzes two reactions: the carboxylation of D-ribulose 1,5-bisphosphate, the primary event in carbon dioxide fixation, as well as the oxidative fragmentation of the pentose substrate in the photorespiration process. Both reactions occur simultaneously and in competition at the same active site. The sequence is that of Ribulose bisphosphate carboxylase large chain from Clarkia xantiana (Gunsight clarkia).